Here is a 263-residue protein sequence, read N- to C-terminus: tRNA1(Val) (adenine(37)-N6)-methyltransferase (263 aa).

This sequence belongs to the methyltransferase superfamily. tRNA (adenine-N(6)-)-methyltransferase family.

It localises to the cytoplasm. It catalyses the reaction adenosine(37) in tRNA1(Val) + S-adenosyl-L-methionine = N(6)-methyladenosine(37) in tRNA1(Val) + S-adenosyl-L-homocysteine + H(+). In terms of biological role, specifically methylates the adenine in position 37 of tRNA(1)(Val) (anticodon cmo5UAC). The chain is tRNA1(Val) (adenine(37)-N6)-methyltransferase from Pseudoalteromonas atlantica (strain T6c / ATCC BAA-1087).